Here is a 239-residue protein sequence, read N- to C-terminus: NAD-dependent protein deacylase (239 aa).

A Deacetylase sirtuin-type domain is found at 1-234; sequence MENLNIVTLT…KKVYDYLREK (234 aa). Residues 11–30 and 89–92 each bind NAD(+); these read GAGI…DGLW and QNVD. The active-site Proton acceptor is the His107. Residues Cys115, Cys118, Cys136, and Cys139 each contribute to the Zn(2+) site. Residues 176–178, 202–204, and Ala220 each bind NAD(+); these read GTS and NPE.

Belongs to the sirtuin family. Class III subfamily. The cofactor is Zn(2+).

The protein localises to the cytoplasm. The enzyme catalyses N(6)-acetyl-L-lysyl-[protein] + NAD(+) + H2O = 2''-O-acetyl-ADP-D-ribose + nicotinamide + L-lysyl-[protein]. Functionally, NAD-dependent protein deacetylase which modulates the activities of several proteins which are inactive in their acetylated form. This Aquifex aeolicus (strain VF5) protein is NAD-dependent protein deacylase.